The chain runs to 461 residues: Phosphoglucosamine mutase (461 aa).

Catalysis depends on S113, which acts as the Phosphoserine intermediate. Residues S113, D251, D253, and D255 each coordinate Mg(2+). S113 is subject to Phosphoserine.

It belongs to the phosphohexose mutase family. Requires Mg(2+) as cofactor. Activated by phosphorylation.

The enzyme catalyses alpha-D-glucosamine 1-phosphate = D-glucosamine 6-phosphate. Catalyzes the conversion of glucosamine-6-phosphate to glucosamine-1-phosphate. This chain is Phosphoglucosamine mutase, found in Prochlorococcus marinus (strain SARG / CCMP1375 / SS120).